We begin with the raw amino-acid sequence, 946 residues long: Bifunctional lysine-specific demethylase and histidyl-hydroxylase NO66 (946 aa).

The interval 14-435 (YRGSATSKNY…TSAASKKNTV (422 aa)) is disordered. 2 stretches are compositionally biased toward polar residues: residues 17–28 (SATSKNYVQKGT) and 37–46 (AKNNNRNLAS). Residues 59–73 (SGSYSDGDNGSSSSS) are compositionally biased toward low complexity. Over residues 99-110 (TLNNHSSQSSPE) the composition is skewed to polar residues. Over residues 117–128 (ESLKRRNDEAEG) the composition is skewed to basic and acidic residues. Positions 169-186 (TLNSHSSQSSPETPANTR) are enriched in polar residues. Over residues 187–198 (ESLKRRTDEAEG) the composition is skewed to basic and acidic residues. Positions 239–256 (TLNSHSYQSSPETPANTR) are enriched in polar residues. The span at 257-268 (ESLKRRTDEAEG) shows a compositional bias: basic and acidic residues. Position 309 is a phosphothreonine (T309). Polar residues predominate over residues 309–327 (TLNSHSSQSSPETPANTRE). Positions 328 to 338 (SLNRRNYEAEG) are enriched in basic and acidic residues. A Phosphoserine modification is found at S339. Polar residues predominate over residues 379–397 (TLNSHSSQSSPETPANTRE). Residues 398–408 (SLNRRNYEAEG) are compositionally biased toward basic and acidic residues. Over residues 416-433 (RTSSTPVGQSTSAASKKN) the composition is skewed to polar residues. The JmjC domain occupies 606–742 (NPSSYLVQLR…NLMEKLMPLV (137 aa)). Fe cation-binding residues include H646, D648, and H708.

The protein belongs to the ROX family. NO66 subfamily. The cofactor is Fe(2+).

The protein localises to the nucleus. The catalysed reaction is N(6),N(6)-dimethyl-L-lysyl(36)-[histone H3] + 2 2-oxoglutarate + 2 O2 = L-lysyl(36)-[histone H3] + 2 formaldehyde + 2 succinate + 2 CO2. Oxygenase that can act as both a histone lysine demethylase and a ribosomal histidine hydroxylase. Specifically demethylates 'Lys-4' (H3K4me) and 'Lys-36' (H3K36me) of histone H3, thereby playing a central role in histone code. This chain is Bifunctional lysine-specific demethylase and histidyl-hydroxylase NO66, found in Drosophila pseudoobscura pseudoobscura (Fruit fly).